Consider the following 91-residue polypeptide: Large ribosomal subunit protein eL37 (91 aa).

Positions 19, 22, 34, and 37 each coordinate Zn(2+). Residues cysteine 19–cysteine 37 form a C4-type zinc finger.

This sequence belongs to the eukaryotic ribosomal protein eL37 family. It depends on Zn(2+) as a cofactor.

Functionally, binds to the 23S rRNA. The protein is Large ribosomal subunit protein eL37 of Caenorhabditis elegans.